The chain runs to 485 residues: NADH-quinone oxidoreductase subunit N (485 aa).

The next 14 helical transmembrane spans lie at 8–28, 35–55, 71–91, 105–125, 127–147, 159–179, 203–223, 235–255, 271–291, 297–317, 326–346, 373–393, 408–430, and 455–475; these read LIAL…MLSI, FLNA…LWFV, GFAM…CTFA, FYLL…ANHL, ALFL…GYAF, YTIL…LVYA, LLAG…LVPF, PAPV…GVVM, VVLG…ALSQ, LLGY…IALQ, VGVY…VVSL, AAVM…LGFI, WWLV…RVAV, and IVVL…QPLI.

It belongs to the complex I subunit 2 family. In terms of assembly, NDH-1 is composed of 13 different subunits. Subunits NuoA, H, J, K, L, M, N constitute the membrane sector of the complex.

It localises to the cell inner membrane. The enzyme catalyses a quinone + NADH + 5 H(+)(in) = a quinol + NAD(+) + 4 H(+)(out). NDH-1 shuttles electrons from NADH, via FMN and iron-sulfur (Fe-S) centers, to quinones in the respiratory chain. The immediate electron acceptor for the enzyme in this species is believed to be ubiquinone. Couples the redox reaction to proton translocation (for every two electrons transferred, four hydrogen ions are translocated across the cytoplasmic membrane), and thus conserves the redox energy in a proton gradient. This chain is NADH-quinone oxidoreductase subunit N, found in Salmonella typhimurium (strain LT2 / SGSC1412 / ATCC 700720).